A 248-amino-acid chain; its full sequence is 2,3-bisphosphoglycerate-dependent phosphoglycerate mutase (248 aa).

Residues 8 to 15 (RHGESTWN), 21 to 22 (TG), arginine 60, 87 to 90 (ERHY), lysine 98, and 114 to 115 (RR) each bind substrate. The Tele-phosphohistidine intermediate role is filled by histidine 9. Residue glutamate 87 is the Proton donor/acceptor of the active site. Positions 117–137 (YDTPPPALEPTDPRASYDDPR) are disordered. Over residues 127–137 (TDPRASYDDPR) the composition is skewed to basic and acidic residues. Residue 183–184 (GN) coordinates substrate.

The protein belongs to the phosphoglycerate mutase family. BPG-dependent PGAM subfamily. In terms of assembly, homodimer.

It carries out the reaction (2R)-2-phosphoglycerate = (2R)-3-phosphoglycerate. Its pathway is carbohydrate degradation; glycolysis; pyruvate from D-glyceraldehyde 3-phosphate: step 3/5. Catalyzes the interconversion of 2-phosphoglycerate and 3-phosphoglycerate. The sequence is that of 2,3-bisphosphoglycerate-dependent phosphoglycerate mutase from Cupriavidus taiwanensis (strain DSM 17343 / BCRC 17206 / CCUG 44338 / CIP 107171 / LMG 19424 / R1) (Ralstonia taiwanensis (strain LMG 19424)).